The primary structure comprises 473 residues: Calcium uptake protein 1, mitochondrial (473 aa).

A mitochondrion-targeting transit peptide spans 1-33; the sequence is MFRLRFIPAVAGLAAVSRRYHGVANHARSRRRL. The disordered stretch occupies residues 61–101; it reads SSVKHSMREETSEKEKEDADQAVESSDEDQPQEGKKKKARV. A compositionally biased stretch (basic and acidic residues) spans 66-79; sequence SMREETSEKEKEDA. Residues 80 to 91 are compositionally biased toward acidic residues; sequence DQAVESSDEDQP. The polybasic region stretch occupies residues 96–107; that stretch reads KKKARVGFRDRK. A k/R-ring region spans residues 123–126; it reads KIFR. The 36-residue stretch at 215–250 folds into the EF-hand 1 domain; the sequence is TPQRNFEIAFKMFDLNGDGEVDMEEFEQVQSIIRSQ. Residues D228, N230, D232, E234, and E239 each coordinate Ca(2+). The segment at 256–260 is k/R-ring; sequence RHRDR. Residues 405 to 440 enclose the EF-hand 2 domain; the sequence is LSDHVCDVVFALFDCDGNGELSNKEFIAIMKQRLMR. Positions 418, 420, 422, 424, and 429 each coordinate Ca(2+). The segment at 452 to 462 is C-helix region; the sequence is RLMRAMWKCAQ.

The protein belongs to the MICU1 family. MICU1 subfamily. In terms of assembly, heterodimer; disulfide-linked; heterodimerizes with micu2. Component of the uniplex complex.

The protein resides in the mitochondrion intermembrane space. Its subcellular location is the mitochondrion inner membrane. Functionally, calcium sensor of the mitochondrial calcium uniporter (mcu) channel, which senses calcium level via its EF-hand domains. micu1 and micu2 form a disulfide-linked heterodimer that stimulates and inhibits MCU activity, depending on the concentration of calcium. At low calcium levels, micu1 occludes the pore of the MCU channel, preventing mitochondrial calcium uptake. At higher calcium levels, calcium-binding to micu1 and micu2 induces a conformational change that weakens mcu-micu1 interactions and moves the micu1-micu2 heterodimer away from the pore, allowing calcium permeation through the mcu channel. Also required to protect against manganese toxicity by preventing manganese uptake by mcu. The sequence is that of Calcium uptake protein 1, mitochondrial (micu1) from Xenopus tropicalis (Western clawed frog).